A 207-amino-acid chain; its full sequence is Ras-related protein Rab-7a (207 aa).

At threonine 2 the chain carries N-acetylthreonine. 11 residues coordinate GTP: serine 17, glycine 18, valine 19, glycine 20, lysine 21, threonine 22, serine 23, serine 34, asparagine 35, tyrosine 37, and threonine 40. Residue threonine 22 coordinates Mg(2+). Residues 28–41 carry the Switch 1 motif; it reads YVNKKFSNQYKATI. Threonine 40 and aspartate 63 together coordinate Mg(2+). Glycine 66 serves as a coordination point for GTP. Residues 67–82 carry the Switch 2 motif; the sequence is QERFQSLGVAFYRGAD. Residue serine 72 is modified to Phosphoserine. 5 residues coordinate GTP: asparagine 125, lysine 126, aspartate 128, alanine 156, and lysine 157. Residues lysine 191 and lysine 194 each participate in a glycyl lysine isopeptide (Lys-Gly) (interchain with G-Cter in ubiquitin) cross-link. S-geranylgeranyl cysteine attachment occurs at residues cysteine 205 and cysteine 207. The residue at position 207 (cysteine 207) is a Cysteine methyl ester.

The protein belongs to the small GTPase superfamily. Rab family. Interacts with NTRK1/TRKA. Interacts with RILP. Interacts with PSMA7. Interacts with RNF115. Interacts with and FYCO1. Interacts with the PIK3C3/VPS34-PIK3R4 complex. The GTP-bound form interacts with OSBPL1A. The GTP-bound form interacts with RAC1. Interacts with CLN3. Interacts with CHM, the substrate-binding subunit of the Rab geranylgeranyltransferase complex. Interacts with C9orf72. Does not interact with HPS4 and the BLOC-3 complex (heterodimer of HPS1 and HPS4). Interacts with CLN5. Interacts with PLEKHM1 (via N- and C-terminus). Interacts with PRPH; the interaction is direct. Interacts with VPS13A. The GDP-bound form interacts with RIMOC1. Interacts with the MON1A-CCZ1B complex and this interaction is enhanced in the presence of RIMOC1. Interacts with VPS39 and VPS41. Forms a ternary complex with LAMP2 and RUFY4; the interaction with LAMP2 is mediated by RUFY4 (via RUN and coiled coil domains). The cofactor is Mg(2+). Deubiquitination at Lys-191 and Lys-194 by USP32. Post-translationally, phosphorylated at Ser-72 by LRRK1; phosphorylation is dependent on protein kinase C (PKC) activation of LRRK1. In terms of processing, prenylated. Prenylation is required for association with cellular membranes. Expressed in osteoclasts and in neurons.

The protein localises to the cytoplasmic vesicle. The protein resides in the phagosome membrane. It localises to the late endosome membrane. It is found in the lysosome membrane. Its subcellular location is the melanosome membrane. The protein localises to the autophagosome membrane. The protein resides in the lipid droplet. It localises to the endosome membrane. It is found in the mitochondrion membrane. The enzyme catalyses GTP + H2O = GDP + phosphate + H(+). Regulated by guanine nucleotide exchange factors (GEFs) which promote the exchange of bound GDP for free GTP. Regulated by GTPase activating proteins (GAPs) which increase the GTP hydrolysis activity. Inhibited by GDP dissociation inhibitors (GDIs). In terms of biological role, the small GTPases Rab are key regulators of intracellular membrane trafficking, from the formation of transport vesicles to their fusion with membranes. Rabs cycle between an inactive GDP-bound form and an active GTP-bound form that is able to recruit to membranes different sets of downstream effectors directly responsible for vesicle formation, movement, tethering and fusion. In its active state, RAB7A binds to a variety of effector proteins playing a key role in the regulation of endo-lysosomal trafficking. Governs early-to-late endosomal maturation, microtubule minus-end as well as plus-end directed endosomal migration and positioning, and endosome-lysosome transport through different protein-protein interaction cascades. Also plays a central role in growth-factor-mediated cell signaling, nutrient-transporter-mediated nutrient uptake, neurotrophin transport in the axons of neurons and lipid metabolism. Also involved in regulation of some specialized endosomal membrane trafficking, such as maturation of melanosomes, pathogen-induced phagosomes (or vacuoles) and autophagosomes. Plays a role in the maturation and acidification of phagosomes that engulf pathogens, such as S.aureus and Mycobacteria. Plays a role in the fusion of phagosomes with lysosomes. In concert with RAC1, plays a role in regulating the formation of RBs (ruffled borders) in osteoclasts. Controls the endosomal trafficking and neurite outgrowth signaling of NTRK1/TRKA. Regulates the endocytic trafficking of the EGF-EGFR complex by regulating its lysosomal degradation. Involved in the ADRB2-stimulated lipolysis through lipophagy, a cytosolic lipase-independent autophagic pathway. Required for the exosomal release of SDCBP, CD63 and syndecan. Required for vesicular trafficking and cell surface expression of ACE2. May play a role in PRPH neuronal intermediate filament assembly. The chain is Ras-related protein Rab-7a from Rattus norvegicus (Rat).